A 544-amino-acid chain; its full sequence is Probable protein kinase UbiB (544 aa).

The region spanning 123–501 is the Protein kinase domain; sequence DFDIEPLASA…KRQQATGKFL (379 aa). ATP is bound by residues 129-137 and K152; that span reads LASASIAQV. Residue D287 is the Proton acceptor of the active site. The helical transmembrane segment at 500–520 threads the bilayer; the sequence is FLFGVGATLVVCSAILVSSPY.

The protein belongs to the ABC1 family. UbiB subfamily.

It is found in the cell inner membrane. It functions in the pathway cofactor biosynthesis; ubiquinone biosynthesis [regulation]. Is probably a protein kinase regulator of UbiI activity which is involved in aerobic coenzyme Q (ubiquinone) biosynthesis. The polypeptide is Probable protein kinase UbiB (Vibrio atlanticus (strain LGP32) (Vibrio splendidus (strain Mel32))).